The primary structure comprises 61 residues: Metallothionein-2B (61 aa).

The residue at position 1 (methionine 1) is an N-acetylmethionine. The beta stretch occupies residues methionine 1–cysteine 29. Residues cysteine 5, cysteine 7, cysteine 13, cysteine 15, cysteine 19, cysteine 21, cysteine 24, cysteine 26, cysteine 29, cysteine 33, cysteine 34, cysteine 36, cysteine 37, cysteine 41, cysteine 44, cysteine 48, cysteine 50, cysteine 57, cysteine 59, and cysteine 60 each coordinate a divalent metal cation. The interval lysine 30–alanine 61 is alpha.

Belongs to the metallothionein superfamily. Type 1 family. In terms of assembly, monomer.

Its function is as follows. Metallothioneins have a high content of cysteine residues that bind various heavy metals; these proteins are transcriptionally regulated by both heavy metals and glucocorticoids. The protein is Metallothionein-2B (MT2B) of Sus scrofa (Pig).